We begin with the raw amino-acid sequence, 488 residues long: Glutamyl-tRNA(Gln) amidotransferase subunit B, mitochondrial (488 aa).

It belongs to the GatB/GatE family. GatB subfamily. As to quaternary structure, subunit of the heterotrimeric GatFAB amidotransferase (AdT) complex, composed of A, B and F subunits.

The protein resides in the mitochondrion. The enzyme catalyses L-glutamyl-tRNA(Gln) + L-glutamine + ATP + H2O = L-glutaminyl-tRNA(Gln) + L-glutamate + ADP + phosphate + H(+). Allows the formation of correctly charged Gln-tRNA(Gln) through the transamidation of misacylated Glu-tRNA(Gln) in the mitochondria. The reaction takes place in the presence of glutamine and ATP through an activated gamma-phospho-Glu-tRNA(Gln). The sequence is that of Glutamyl-tRNA(Gln) amidotransferase subunit B, mitochondrial from Candida albicans (strain SC5314 / ATCC MYA-2876) (Yeast).